We begin with the raw amino-acid sequence, 287 residues long: Stomatin-like protein 3 (287 aa).

Serine 3 carries the phosphoserine modification. A helical; Signal-anchor for type III membrane protein transmembrane segment spans residues 25-45 (WILFFLSFLLMLVTFPISVWM). At 46-287 (CLKIIKEYER…GNNKKVTAKA (242 aa)) the chain is on the cytoplasmic side. At serine 237 the chain carries Phosphoserine.

The protein belongs to the band 7/mec-2 family. In terms of assembly, homodimer. Interacts with PIEZO1 and PIEZO2. In terms of tissue distribution, expressed by all dorsal root ganglion neurons and is selectively expressed in neuronal tissues. Detected in olfactory epithelium.

Its subcellular location is the cell membrane. In terms of biological role, required for the function of many mechanoreceptors. Modulate mechanotransduction channels and acid-sensing ion channels (ASIC) proteins. Potentiates PIEZO1 and PIEZO2 function by increasing their sensitivity to mechanical stimulations. The sequence is that of Stomatin-like protein 3 (Stoml3) from Mus musculus (Mouse).